The following is a 217-amino-acid chain: Leucyl/phenylalanyl-tRNA--protein transferase (217 aa).

It belongs to the L/F-transferase family.

The protein localises to the cytoplasm. It carries out the reaction N-terminal L-lysyl-[protein] + L-leucyl-tRNA(Leu) = N-terminal L-leucyl-L-lysyl-[protein] + tRNA(Leu) + H(+). The enzyme catalyses N-terminal L-arginyl-[protein] + L-leucyl-tRNA(Leu) = N-terminal L-leucyl-L-arginyl-[protein] + tRNA(Leu) + H(+). The catalysed reaction is L-phenylalanyl-tRNA(Phe) + an N-terminal L-alpha-aminoacyl-[protein] = an N-terminal L-phenylalanyl-L-alpha-aminoacyl-[protein] + tRNA(Phe). Functions in the N-end rule pathway of protein degradation where it conjugates Leu, Phe and, less efficiently, Met from aminoacyl-tRNAs to the N-termini of proteins containing an N-terminal arginine or lysine. In Caulobacter vibrioides (strain ATCC 19089 / CIP 103742 / CB 15) (Caulobacter crescentus), this protein is Leucyl/phenylalanyl-tRNA--protein transferase.